A 247-amino-acid chain; its full sequence is Cytochrome c oxidase subunit 2 (247 aa).

Residues 1 to 38 are Mitochondrial intermembrane-facing; the sequence is MREMMMNNMLNDVPTPWAMYFQDSATPNMEGMMELHNN. Residues 39–55 form a helical membrane-spanning segment; the sequence is VLFYLCVMLGFVTYMLY. Topologically, residues 56 to 86 are mitochondrial matrix; sequence NVMTVYNKSAMAYKYMNHGQFMEMMWTTFPA. A helical membrane pass occupies residues 87–103; that stretch reads MMLLMMAFPSFMLLYMC. At 104–247 the chain is on the mitochondrial intermembrane side; sequence DEVMAPAMTI…VDFLAWIDEQ (144 aa). 6 residues coordinate Cu cation: H182, C217, E219, C221, H225, and M228. A Mg(2+)-binding site is contributed by E219.

Belongs to the cytochrome c oxidase subunit 2 family. In terms of assembly, component of the cytochrome c oxidase (complex IV, CIV), a multisubunit enzyme composed of a catalytic core of 3 subunits and several supernumerary subunits. The complex exists as a monomer or a dimer and forms supercomplexes (SCs) in the inner mitochondrial membrane with ubiquinol-cytochrome c oxidoreductase (cytochrome b-c1 complex, complex III, CIII). Cu cation is required as a cofactor.

The protein localises to the mitochondrion inner membrane. The catalysed reaction is 4 Fe(II)-[cytochrome c] + O2 + 8 H(+)(in) = 4 Fe(III)-[cytochrome c] + 2 H2O + 4 H(+)(out). In terms of biological role, component of the cytochrome c oxidase, the last enzyme in the mitochondrial electron transport chain which drives oxidative phosphorylation. The respiratory chain contains 3 multisubunit complexes succinate dehydrogenase (complex II, CII), ubiquinol-cytochrome c oxidoreductase (cytochrome b-c1 complex, complex III, CIII) and cytochrome c oxidase (complex IV, CIV), that cooperate to transfer electrons derived from NADH and succinate to molecular oxygen, creating an electrochemical gradient over the inner membrane that drives transmembrane transport and the ATP synthase. Cytochrome c oxidase is the component of the respiratory chain that catalyzes the reduction of oxygen to water. Electrons originating from reduced cytochrome c in the intermembrane space (IMS) are transferred via the dinuclear copper A center (CU(A)) of subunit 2 and heme A of subunit 1 to the active site in subunit 1, a binuclear center (BNC) formed by heme A3 and copper B (CU(B)). The BNC reduces molecular oxygen to 2 water molecules using 4 electrons from cytochrome c in the IMS and 4 protons from the mitochondrial matrix. The polypeptide is Cytochrome c oxidase subunit 2 (COX2) (Eeniella nana (Yeast)).